The following is a 120-amino-acid chain: Large ribosomal subunit protein eL8 (120 aa).

Belongs to the eukaryotic ribosomal protein eL8 family. In terms of assembly, part of the 50S ribosomal subunit. Probably part of the RNase P complex.

It is found in the cytoplasm. Functionally, multifunctional RNA-binding protein that recognizes the K-turn motif in ribosomal RNA, the RNA component of RNase P, box H/ACA, box C/D and box C'/D' sRNAs. The chain is Large ribosomal subunit protein eL8 from Methanosarcina acetivorans (strain ATCC 35395 / DSM 2834 / JCM 12185 / C2A).